A 1077-amino-acid chain; its full sequence is Carbamoyl phosphate synthase large chain (1077 aa).

The segment at 1–403 is carboxyphosphate synthetic domain; that stretch reads MPKRTDIQSI…SLHKALRGLE (403 aa). The ATP site is built by Arg-129, Arg-169, Gly-175, Gly-176, Glu-208, Leu-210, Glu-215, Gly-241, Ile-242, His-243, Gln-285, and Glu-299. The 196-residue stretch at 133–328 folds into the ATP-grasp 1 domain; sequence DKAMKSIGLE…IAKIAAKLAV (196 aa). The Mg(2+) site is built by Gln-285, Glu-299, and Asn-301. 3 residues coordinate Mn(2+): Gln-285, Glu-299, and Asn-301. An oligomerization domain region spans residues 404 to 553; it reads VGATGFDEMV…YSSYDEECEA (150 aa). Residues 554 to 935 are carbamoyl phosphate synthetic domain; it reads NPTDKDKIMV…AYAKAELGCG (382 aa). Residues 678–869 form the ATP-grasp 2 domain; it reads QAAVERLGLL…LAKIAARVMA (192 aa). Residues Arg-714, Arg-753, Leu-755, Glu-760, Gly-785, Val-786, His-787, Ser-788, Gln-828, and Glu-840 each coordinate ATP. Positions 828, 840, and 842 each coordinate Mg(2+). Positions 828, 840, and 842 each coordinate Mn(2+). An MGS-like domain is found at 936–1077; sequence SVYPEGGRAL…HAKVKASLEA (142 aa). Residues 936–1077 are allosteric domain; that stretch reads SVYPEGGRAL…HAKVKASLEA (142 aa).

This sequence belongs to the CarB family. Composed of two chains; the small (or glutamine) chain promotes the hydrolysis of glutamine to ammonia, which is used by the large (or ammonia) chain to synthesize carbamoyl phosphate. Tetramer of heterodimers (alpha,beta)4. The cofactor is Mg(2+). Mn(2+) serves as cofactor.

It carries out the reaction hydrogencarbonate + L-glutamine + 2 ATP + H2O = carbamoyl phosphate + L-glutamate + 2 ADP + phosphate + 2 H(+). The catalysed reaction is hydrogencarbonate + NH4(+) + 2 ATP = carbamoyl phosphate + 2 ADP + phosphate + 2 H(+). It functions in the pathway amino-acid biosynthesis; L-arginine biosynthesis; carbamoyl phosphate from bicarbonate: step 1/1. It participates in pyrimidine metabolism; UMP biosynthesis via de novo pathway; (S)-dihydroorotate from bicarbonate: step 1/3. In terms of biological role, large subunit of the glutamine-dependent carbamoyl phosphate synthetase (CPSase). CPSase catalyzes the formation of carbamoyl phosphate from the ammonia moiety of glutamine, carbonate, and phosphate donated by ATP, constituting the first step of 2 biosynthetic pathways, one leading to arginine and/or urea and the other to pyrimidine nucleotides. The large subunit (synthetase) binds the substrates ammonia (free or transferred from glutamine from the small subunit), hydrogencarbonate and ATP and carries out an ATP-coupled ligase reaction, activating hydrogencarbonate by forming carboxy phosphate which reacts with ammonia to form carbamoyl phosphate. The chain is Carbamoyl phosphate synthase large chain from Vibrio parahaemolyticus serotype O3:K6 (strain RIMD 2210633).